Consider the following 474-residue polypeptide: Ribulose bisphosphate carboxylase/oxygenase activase, chloroplastic (474 aa).

A chloroplast-targeting transit peptide spans 1–58 (MAAAVSTVGAINRAPLSLNGSGSGAVSAPASTFLGKKVVTVSRFAQSNKKSNGSFKVL). Thr-78 is modified (phosphothreonine; by CK2). 165 to 172 (GGKGQGKS) lines the ATP pocket. Thr-283 carries the phosphothreonine modification.

This sequence belongs to the RuBisCO activase family. In terms of processing, phosphorylated at Thr-78 by CK2.

Its subcellular location is the plastid. It is found in the chloroplast stroma. The protein localises to the chloroplast. The protein resides in the plastoglobule. Its function is as follows. Activation of RuBisCO (ribulose-1,5-bisphosphate carboxylase/oxygenase; EC 4.1.1.39) involves the ATP-dependent carboxylation of the epsilon-amino group of lysine leading to a carbamate structure. In Arabidopsis thaliana (Mouse-ear cress), this protein is Ribulose bisphosphate carboxylase/oxygenase activase, chloroplastic (RCA).